Reading from the N-terminus, the 208-residue chain is Riboflavin synthase (208 aa).

Lumazine-binding repeat units follow at residues 1–97 (MFTG…MGGH) and 98–195 (IISG…VDTT). Residues 4–6 (GIV), 48–50 (CLT), 62–67 (DIMKIT), 101–103 (GHI), lysine 137, 146–148 (SLT), and 160–165 (SIIPET) each bind 2,4-dihydroxypteridine.

As to quaternary structure, homotrimer.

The catalysed reaction is 2 6,7-dimethyl-8-(1-D-ribityl)lumazine + H(+) = 5-amino-6-(D-ribitylamino)uracil + riboflavin. The protein operates within cofactor biosynthesis; riboflavin biosynthesis; riboflavin from 2-hydroxy-3-oxobutyl phosphate and 5-amino-6-(D-ribitylamino)uracil: step 2/2. Its function is as follows. Catalyzes the dismutation of two molecules of 6,7-dimethyl-8-ribityllumazine, resulting in the formation of riboflavin and 5-amino-6-(D-ribitylamino)uracil. The chain is Riboflavin synthase (ribE) from Buchnera aphidicola subsp. Schizaphis graminum (strain Sg).